Reading from the N-terminus, the 112-residue chain is Thioredoxin (112 aa).

The 111-residue stretch at 2-112 (SEDSATVAVT…ALLRELSDAL (111 aa)) folds into the Thioredoxin domain. An intrachain disulfide couples Cys35 to Cys38.

The protein belongs to the thioredoxin family.

Participates in various redox reactions through the reversible oxidation of its active center dithiol to a disulfide and catalyzes dithiol-disulfide exchange reactions. In Mycolicibacterium smegmatis (Mycobacterium smegmatis), this protein is Thioredoxin (trxA).